Reading from the N-terminus, the 237-residue chain is Ribosomal RNA small subunit methyltransferase G (237 aa).

Residues Gly78, Phe83, 129–130, and Arg148 contribute to the S-adenosyl-L-methionine site; that span reads AE.

The protein belongs to the methyltransferase superfamily. RNA methyltransferase RsmG family.

It is found in the cytoplasm. Functionally, specifically methylates the N7 position of a guanine in 16S rRNA. The chain is Ribosomal RNA small subunit methyltransferase G from Streptococcus pyogenes serotype M1.